The sequence spans 171 residues: UPF0316 protein Exig_2248 (171 aa).

3 helical membrane-spanning segments follow: residues 4–24 (ILLI…RTIM), 31–51 (IIAG…LGIV), and 57–77 (TVGM…GGFV).

It belongs to the UPF0316 family.

Its subcellular location is the cell membrane. This Exiguobacterium sibiricum (strain DSM 17290 / CCUG 55495 / CIP 109462 / JCM 13490 / 255-15) protein is UPF0316 protein Exig_2248.